Here is a 665-residue protein sequence, read N- to C-terminus: Methionine--tRNA ligase (665 aa).

A 'HIGH' region motif is present at residues 12 to 22 (YYPSGKLHIGS). The short motif at 308-312 (KMSKS) is the 'KMSKS' region element. K311 contributes to the ATP binding site. Residues 562–665 (TFDAVEIRVA…SSVPNGSIIG (104 aa)) enclose the tRNA-binding domain.

The protein belongs to the class-I aminoacyl-tRNA synthetase family. MetG type 2B subfamily. Homodimer.

The protein localises to the cytoplasm. It carries out the reaction tRNA(Met) + L-methionine + ATP = L-methionyl-tRNA(Met) + AMP + diphosphate. Its function is as follows. Is required not only for elongation of protein synthesis but also for the initiation of all mRNA translation through initiator tRNA(fMet) aminoacylation. This is Methionine--tRNA ligase (metG) from Streptococcus pyogenes serotype M1.